Reading from the N-terminus, the 1049-residue chain is RIMS-binding protein 2 (1049 aa).

Positions 164-231 (GKVHLCVARY…PSNFVDFIQD (68 aa)) constitute an SH3 1 domain. 3 Fibronectin type-III domains span residues 294–387 (VPYP…GKDV), 390–471 (APSQ…EKDE), and 486–587 (PPQD…VPPA). Disordered stretches follow at residues 580-664 (PDLL…VSTT), 694-714 (SAGP…EVKR), and 728-750 (LGQQ…GSDL). Over residues 582-598 (LLVPPAPHPRTAPPPKP) the composition is skewed to pro residues. Over residues 603-616 (MDTKDLGPHVKVDE) the composition is skewed to basic and acidic residues. Low complexity predominate over residues 641–651 (GPGRRSPSPSR). A phosphoserine mark is found at serine 701 and serine 709. The span at 735–746 (CHGDEYHTESSR) shows a compositional bias: basic and acidic residues. Serine 832 and serine 839 each carry phosphoserine. Threonine 841 is subject to Phosphothreonine. 2 SH3 domains span residues 848-916 (LPAR…EIHA) and 952-1019 (VPTR…EVPD). The segment at 1024 to 1049 (HLSDAPPHYSHDPPMRTKAKRVSQPP) is disordered. The span at 1040–1049 (TKAKRVSQPP) shows a compositional bias: basic residues.

It belongs to the RIMBP family. As to quaternary structure, interacts with CACNA1D and CACNA1B, and potentially with other Ca(2+) channel alpha-1 isoforms. Interacts with RIMS1 and RIMS2.

The protein resides in the cell membrane. The protein localises to the synapse. Functionally, plays a role in the synaptic transmission as bifunctional linker that interacts simultaneously with RIMS1, RIMS2, CACNA1D and CACNA1B. This Rattus norvegicus (Rat) protein is RIMS-binding protein 2 (Rimbp2).